The sequence spans 446 residues: MSDYLSVSTLTKYLKLKFDKDPYLERVYLTGQVSNFRRRPNHQYFSLKDDKSVIQATMWSGHFKKLGFELEEGMKVNVVGRVQLYEPSGSYSIIVEKAEPDGIGALAIQFEQLKKKLSQAGYFDDRHKQLIPQFVRKIGVVTSPSGAVIRDIITTVSRRFPGVEILLFPTKVQGEGAAQEIAQTIALANEKKDLDLLIVGRGGGSIEDLWAFNEECVVEAIFESRLPVISSVGHETDTTLADFVADRRAATPTAAAELATPVTKIDILSWITERENRMYQSSLRLIRTKEERLQKSKQSVIFRQPERLYDGFLQKLDNLNQQLTYSMRDKLQTVRQKQGLLHQKLQGIDLKQRIHIYQERVVQSRRLLSSTMTSQYDSKLARFEKAQDALISLDSSRIVARGYAIIEKNHTLVSTTNGINEGDHLQVKMQDGLLEVEVKDVRQENI.

This sequence belongs to the XseA family. In terms of assembly, heterooligomer composed of large and small subunits.

It is found in the cytoplasm. The enzyme catalyses Exonucleolytic cleavage in either 5'- to 3'- or 3'- to 5'-direction to yield nucleoside 5'-phosphates.. Its function is as follows. Bidirectionally degrades single-stranded DNA into large acid-insoluble oligonucleotides, which are then degraded further into small acid-soluble oligonucleotides. This Streptococcus agalactiae serotype Ia (strain ATCC 27591 / A909 / CDC SS700) protein is Exodeoxyribonuclease 7 large subunit.